A 501-amino-acid polypeptide reads, in one-letter code: Cytochrome P450 6j1 (501 aa).

Position 444 (Cys-444) interacts with heme.

The protein belongs to the cytochrome P450 family. Heme serves as cofactor.

The protein resides in the endoplasmic reticulum membrane. It localises to the microsome membrane. In Blattella germanica (German cockroach), this protein is Cytochrome P450 6j1 (CYP6J1).